A 95-amino-acid polypeptide reads, in one-letter code: Acylphosphatase (95 aa).

The Acylphosphatase-like domain occupies 7-95 (CTMAWVYGSV…RSWDKFAILY (89 aa)). Catalysis depends on residues Arg22 and Asn40.

Belongs to the acylphosphatase family.

It catalyses the reaction an acyl phosphate + H2O = a carboxylate + phosphate + H(+). The polypeptide is Acylphosphatase (acyP) (Klebsiella pneumoniae subsp. pneumoniae (strain ATCC 700721 / MGH 78578)).